The following is a 347-amino-acid chain: MQIKFWPQDLKLAHTWTIASSVTSGSDVTSVGIVQLTDRDGTVGLGEAAPARRYNESTPGSLDFIAKVDATKLSFDNIEASMKYVESLASGQFAAKSAINVALLDGAARKAGKPIYDLLGLGFRNNHHVTSFSIGIDKADVIRKKVLAAEQYPVLKLKVGAADDKANLAALREAAPQKWVRVDANEGWKTKEHALEMIEWLAQDKFIQYIEQPMPADSNPKDIAWLKARSPLPLFGDESYHTAKDVDHCAECYHGVNVKLCKTGGISNAYEALQVARKAGLKTMIGCMIETSILISAAAHLAELCDYLDIDGNLLTTNDPYLGVTAEKGLLSFASAPEKLGLRVRAK.

Substrate is bound at residue 156 to 158 (KLK). The Mg(2+) site is built by D183, E211, and D237. Substrate is bound by residues K259 and 309-311 (DID).

Belongs to the mandelate racemase/muconate lactonizing enzyme family. Mg(2+) is required as a cofactor.

Functionally, dipeptide epimerase with a broad substrate specificity. Catalyzes the epimerization of L-Ala-L-Ala, L-Ala-L-Ser, L-Ala-L-Thr, L-Ala-L-Met, L-Ala-L-Phe, L-Ala-L-Tyr, L-Gly-L-Asp, L-Val-L-Asp, L-Val-L-Glu and L-Val-L-Phe (in vitro). Can also catalyze the epimerization of L-Ala-L-Glu, but with lower efficiency. This Pedosphaera parvula (strain Ellin514) protein is L-Ala-D/L-amino acid epimerase.